The primary structure comprises 91 residues: Large ribosomal subunit protein uL23c (91 aa).

Belongs to the universal ribosomal protein uL23 family. Part of the 50S ribosomal subunit.

The protein localises to the plastid. It is found in the chloroplast. Binds to 23S rRNA. This Anthoceros angustus (Hornwort) protein is Large ribosomal subunit protein uL23c (rpl23).